A 231-amino-acid chain; its full sequence is NADH-ubiquinone oxidoreductase chain 4 (231 aa).

The next 6 membrane-spanning stretches (helical) occupy residues 1–21 (PIAGSMVLAAILLKLGGYGII), 34–54 (LFLPFIVLALWGAILANLTCL), 61–80 (SLIAYSSISHMGLVVAAIII), 84–106 (WGLSGAMALMIAHGFTSSALFCL), 128–148 (ILPMATTWWLLANLMNIATPP), and 169–189 (TIILLGLSMLITASYSLHMFL).

Belongs to the complex I subunit 4 family.

The protein resides in the mitochondrion membrane. It carries out the reaction a ubiquinone + NADH + 5 H(+)(in) = a ubiquinol + NAD(+) + 4 H(+)(out). Core subunit of the mitochondrial membrane respiratory chain NADH dehydrogenase (Complex I) that is believed to belong to the minimal assembly required for catalysis. Complex I functions in the transfer of electrons from NADH to the respiratory chain. The immediate electron acceptor for the enzyme is believed to be ubiquinone. The chain is NADH-ubiquinone oxidoreductase chain 4 (MT-ND4) from Metlapilcoatlus nummifer (Mexican jumping pitviper).